A 181-amino-acid chain; its full sequence is Large ribosomal subunit protein uL10 (181 aa).

This sequence belongs to the universal ribosomal protein uL10 family. In terms of assembly, part of the ribosomal stalk of the 50S ribosomal subunit. The N-terminus interacts with L11 and the large rRNA to form the base of the stalk. The C-terminus forms an elongated spine to which L12 dimers bind in a sequential fashion forming a multimeric L10(L12)X complex.

In terms of biological role, forms part of the ribosomal stalk, playing a central role in the interaction of the ribosome with GTP-bound translation factors. This chain is Large ribosomal subunit protein uL10, found in Chloroflexus aggregans (strain MD-66 / DSM 9485).